We begin with the raw amino-acid sequence, 461 residues long: uncharacterized protein (461 aa).

The span at 1 to 19 (MEKCSHESGRHSAENDGKY) shows a compositional bias: basic and acidic residues. The segment at 1–21 (MEKCSHESGRHSAENDGKYDI) is disordered.

This sequence belongs to the CapA family.

Its function is as follows. Could be involved in the biosynthesis of a cell wall component. This is an uncharacterized protein from Sinorhizobium fredii (strain NBRC 101917 / NGR234).